Here is a 288-residue protein sequence, read N- to C-terminus: MILKLNFCLSTYSVLILLSLSTQAFAANQAKTKVVPSSTISTKSLKNGISEQVEGSANIPGRLADIEVNGSGYPTDDEDGDDVHGSGKPPSSATTKSDKVTSPSHAVVTAKPTTVPTTTASFKPPVQPKPKPAANDKEIKVEEDEDDDEDEDEDDEDDEEDFADENIHNDEDFFTTTTTTTYRPIVVATTSTPRSAATNPPRQQPPMVTSTISSGPFSPFHETLANGFYAAIAGGVLVAVITAILLVLFVVFRIRKKDEGSYALDEPKQARPYASYGYTKASTKEFYA.

A signal peptide spans 1–26 (MILKLNFCLSTYSVLILLSLSTQAFA). Over 27-231 (ANQAKTKVVP…ETLANGFYAA (205 aa)) the chain is Extracellular. The segment at 67–175 (EVNGSGYPTD…NIHNDEDFFT (109 aa)) is disordered. N-linked (GlcNAc...) asparagine glycosylation is present at N69. 2 O-linked (Xyl...) (glycosaminoglycan) serine glycosylation sites follow: S71 and S86. Residues 89–104 (PPSSATTKSDKVTSPS) show a composition bias toward polar residues. The span at 106 to 124 (AVVTAKPTTVPTTTASFKP) shows a compositional bias: low complexity. Acidic residues predominate over residues 141-164 (VEEDEDDDEDEDEDDEDDEEDFAD). O-linked (Xyl...) (glycosaminoglycan) serine glycosylation is present at S214. A helical membrane pass occupies residues 232-252 (IAGGVLVAVITAILLVLFVVF). Residues 253 to 288 (RIRKKDEGSYALDEPKQARPYASYGYTKASTKEFYA) are Cytoplasmic-facing.

The protein belongs to the syndecan proteoglycan family.

Its subcellular location is the membrane. The protein localises to the cell surface. The protein resides in the cell junction. It localises to the cytoplasm. Functionally, cell surface proteoglycan that bears heparan sulfate. Required for correct mitotic spindle orientation of the ABar blastomere division plane and this may be through modulation of astral microtubule array, and in association with the wnt-signaling proteins mig-5 and dsh-2. Involved in the migration of AQR and PQR neurons, which descend from the Q neuroblasts. Promotes the axon guidance of D-type motor neurons. The protein is Probable syndecan of Caenorhabditis elegans.